Consider the following 293-residue polypeptide: Delta(3,5)-Delta(2,4)-dienoyl-CoA isomerase, mitochondrial (293 aa).

Substrate-binding positions include 84–88 and Gly-142; that span reads AGLNL.

It belongs to the enoyl-CoA hydratase/isomerase family.

Its subcellular location is the mitochondrion. It catalyses the reaction (3E,5Z)-octadienoyl-CoA = (2E,4E)-octadienoyl-CoA. The catalysed reaction is (3E,5Z,8Z,11Z,14Z)-eicosapentaenoyl-CoA = (2E,4E,8Z,11Z,14Z)-eicosapentaenoyl-CoA. It participates in lipid metabolism; fatty acid beta-oxidation. Its function is as follows. Isomerization of 3-trans,5-cis-dienoyl-CoA to 2-trans,4-trans-dienoyl-CoA. This Dictyostelium discoideum (Social amoeba) protein is Delta(3,5)-Delta(2,4)-dienoyl-CoA isomerase, mitochondrial (ech1).